Consider the following 338-residue polypeptide: Ketol-acid reductoisomerase (NADP(+)) (338 aa).

In terms of domain architecture, KARI N-terminal Rossmann spans 1-181; sequence MKVFYDKDCD…GGGKAGIIET (181 aa). Residues 24–27, R47, and S52 each bind NADP(+); that span reads YGSQ. H107 is a catalytic residue. G133 is an NADP(+) binding site. The region spanning 182-327 is the KARI C-terminal knotted domain; sequence NFKEETETDL…AQLRAMMPWI (146 aa). 4 residues coordinate Mg(2+): D190, E194, E226, and E230. S251 lines the substrate pocket.

The protein belongs to the ketol-acid reductoisomerase family. Requires Mg(2+) as cofactor.

It carries out the reaction (2R)-2,3-dihydroxy-3-methylbutanoate + NADP(+) = (2S)-2-acetolactate + NADPH + H(+). It catalyses the reaction (2R,3R)-2,3-dihydroxy-3-methylpentanoate + NADP(+) = (S)-2-ethyl-2-hydroxy-3-oxobutanoate + NADPH + H(+). The protein operates within amino-acid biosynthesis; L-isoleucine biosynthesis; L-isoleucine from 2-oxobutanoate: step 2/4. It functions in the pathway amino-acid biosynthesis; L-valine biosynthesis; L-valine from pyruvate: step 2/4. Functionally, involved in the biosynthesis of branched-chain amino acids (BCAA). Catalyzes an alkyl-migration followed by a ketol-acid reduction of (S)-2-acetolactate (S2AL) to yield (R)-2,3-dihydroxy-isovalerate. In the isomerase reaction, S2AL is rearranged via a Mg-dependent methyl migration to produce 3-hydroxy-3-methyl-2-ketobutyrate (HMKB). In the reductase reaction, this 2-ketoacid undergoes a metal-dependent reduction by NADPH to yield (R)-2,3-dihydroxy-isovalerate. The protein is Ketol-acid reductoisomerase (NADP(+)) of Paracidovorax citrulli (strain AAC00-1) (Acidovorax citrulli).